A 578-amino-acid polypeptide reads, in one-letter code: Nuclear receptor subfamily 1 group D member 2 (578 aa).

The tract at residues 1–60 (MELNAGGVIAYISSSSSASSPASCHSEGSENSFQSSSSSVPSSPNSSNCDANGNPKNTDV) is required for phosphorylation by CSNK1E and cytoplasmic localization. The interval 1 to 99 (MELNAGGVIA…HSGMTKFSGM (99 aa)) is modulating. Residues 13–47 (SSSSSASSPASCHSEGSENSFQSSSSSVPSSPNSS) show a composition bias toward low complexity. Residues 13–89 (SSSSSASSPA…KPGAPGMTKS (77 aa)) form a disordered region. Phosphoserine; by GSK3-beta is present on Ser46. Over residues 48-61 (NCDANGNPKNTDVS) the composition is skewed to polar residues. Residues 100–176 (VLLCKVCGDV…VGMSRDAVRF (77 aa)) constitute a DNA-binding region (nuclear receptor). 2 consecutive NR C4-type zinc fingers follow at residues 103–123 (CKVCGDVASGFHYGVHACEGC) and 140–164 (CLKNENCSIMRMNRNRCQQCRFKKC). Residues Lys162 and Lys163 each carry the N6-acetyllysine; by KAT5 modification. A disordered region spans residues 214-247 (EPHEQSVPPAQEQLRPKPQLEQENIKSTPPPSDF). Residues 227-237 (LRPKPQLEQEN) show a composition bias toward basic and acidic residues. Cystine bridges form between Cys336-Cys342 and Cys373-Cys383. The NR LBD domain maps to 368–578 (RNSYLCSTGG…EELLAFKVHP (211 aa)). Heme is bound by residues Cys383 and His567. Residues 396 to 578 (SGHEIWEEFS…EELLAFKVHP (183 aa)) form an interaction with ZNHIT1 region.

It belongs to the nuclear hormone receptor family. NR1 subfamily. As to quaternary structure, binds DNA as a monomer or a homodimer. Interacts with NCOA5 coactivator, leading to a strong increase of transcription of target genes. Interacts (via N-terminus) with KAT5. Interacts (via C-terminus) with HDAC1. Interacts with ZNHIT1. Interacts with SIAH2. Deacetylated by HDAC1. Acetylation and deacetylation regulate its transcriptional regulatory activity. In terms of processing, under more reducing intracellular redox conditions, Cys-383 is in its heme-bound state, which is optimal for recruitment of the NCOR1/HDAC3 corepressor complex and repression of target genes. When subjected to oxidative stress conditions, Cys-383 undergoes oxidation to form a disulfide bridge with Cys-373, also triggering a ligand switch that results in release of bound heme and derepression of target genes. Post-translationally, ubiquitinated by SIAH2; leading to its proteasomal degradation. Phosphorylated by CSNK1E; phosphorylation enhances its cytoplasmic localization.

It is found in the nucleus. The protein localises to the cytoplasm. Its activity is regulated as follows. The heme-bound form can bind gaseous signaling molecules such as CO and nitric oxide (NO) and NO can reverse its transcriptional repressor activity. Its function is as follows. Transcriptional repressor which coordinates circadian rhythm and metabolic pathways in a heme-dependent manner. Integral component of the complex transcription machinery that governs circadian rhythmicity and forms a critical negative limb of the circadian clock by directly repressing the expression of core clock components BMAL1 and CLOCK. Also regulates genes involved in metabolic functions, including lipid metabolism and the inflammatory response. Acts as a receptor for heme which stimulates its interaction with the NCOR1/HDAC3 corepressor complex, enhancing transcriptional repression. Recognizes two classes of DNA response elements within the promoter of its target genes and can bind to DNA as either monomers or homodimers, depending on the nature of the response element. Binds as a monomer to a response element composed of the consensus half-site motif 5'-[A/G]GGTCA-3' preceded by an A/T-rich 5' sequence (RevRE), or as a homodimer to a direct repeat of the core motif spaced by two nuclegotides (RevDR-2). Acts as a potent competitive repressor of ROR alpha (RORA) function and also negatively regulates the expression of NR1D1. Regulates lipid and energy homeostasis in the skeletal muscle via repression of genes involved in lipid metabolism and myogenesis including: CD36, FABP3, FABP4, UCP3, SCD1 and MSTN. Regulates hepatic lipid metabolism via the repression of APOC3. Represses gene expression at a distance in macrophages by inhibiting the transcription of enhancer-derived RNAs (eRNAs). In addition to its activity as a repressor, can also act as a transcriptional activator. Acts as a transcriptional activator of the sterol regulatory element-binding protein 1 (SREBF1) and the inflammatory mediator interleukin-6 (IL6) in the skeletal muscle. Plays a role in the regulation of circadian sleep/wake cycle; essential for maintaining wakefulness during the dark phase or active period. Key regulator of skeletal muscle mitochondrial function; negatively regulates the skeletal muscle expression of core clock genes and genes involved in mitochondrial biogenesis, fatty acid beta-oxidation and lipid metabolism. May play a role in the circadian control of neutrophilic inflammation in the lung. This chain is Nuclear receptor subfamily 1 group D member 2, found in Rattus norvegicus (Rat).